The sequence spans 108 residues: Protein SMALL AUXIN UP-REGULATED RNA 8 (108 aa).

Belongs to the ARG7 family. As to expression, expressed in seedlings, leaves and flowers.

It localises to the cell membrane. Its function is as follows. Provide a mechanistic link between auxin and plasma membrane H(+)-ATPases (PM H(+)-ATPases, e.g. AHA1 and AHA2), and triggers PM H(+)-ATPases activity by promoting phosphorylation of their C-terminal autoinhibitory domain as a result of PP2C-D subfamily of type 2C phosphatases inhibition, thus leading to the acidification of the apoplast and the facilitation of solutes and water uptake to drive cell expansion. Triggers plant growth probably by promoting cell elongation. Regulates branch angles and bending. The polypeptide is Protein SMALL AUXIN UP-REGULATED RNA 8 (Arabidopsis thaliana (Mouse-ear cress)).